The primary structure comprises 62 residues: Small ribosomal subunit protein eS27 (62 aa).

Residues C17, C20, C36, and C39 each coordinate Zn(2+). The C4-type zinc finger occupies 17–39; sequence CPECNNEQIVFGSPATVVKCLTC.

It belongs to the eukaryotic ribosomal protein eS27 family. In terms of assembly, part of the 30S ribosomal subunit. Zn(2+) is required as a cofactor.

This Methanocaldococcus jannaschii (strain ATCC 43067 / DSM 2661 / JAL-1 / JCM 10045 / NBRC 100440) (Methanococcus jannaschii) protein is Small ribosomal subunit protein eS27.